Reading from the N-terminus, the 610-residue chain is E-selectin (610 aa).

The N-terminal stretch at 1–21 (MIASQFLSALTLVLLIKESGA) is a signal peptide. A C-type lectin domain is found at 22-138 (WSYSASTTNM…CNKKKLALCY (117 aa)). Over 22 to 555 (WSYSASTTNM…CEATAKSNIP (534 aa)) the chain is Extracellular. Asn30 is a glycosylation site (N-linked (GlcNAc...) asparagine). Disulfide bonds link Cys40–Cys137, Cys110–Cys129, Cys142–Cys153, Cys147–Cys162, Cys164–Cys173, Cys179–Cys223, Cys192–Cys205, Cys209–Cys236, Cys241–Cys285, Cys254–Cys267, Cys271–Cys298, Cys303–Cys348, Cys334–Cys361, Cys366–Cys411, Cys397–Cys424, Cys429–Cys474, Cys460–Cys487, Cys492–Cys533, and Cys519–Cys546. Ca(2+) is bound by residues Glu101, Asn103, and Glu108. A carbohydrate-binding positions include 101 to 108 (EPNNKQNE), 112 to 117 (EIYIKR), and 125 to 127 (NDE). The Ca(2+) site is built by Asn125 and Asp126. The EGF-like domain maps to 139-174 (TAACTHTSCSGHGECVETINNYTCQCHPGFTGLRCE). A glycan (N-linked (GlcNAc...) asparagine) is linked at Asn159. Sushi domains follow at residues 177 to 238 (VTCQ…ACHV), 239 to 300 (VECD…TCKA), 314 to 363 (VNCS…VCKA), 365 to 426 (QCKA…TCEA), 428 to 489 (RCDA…SCQV), and 490 to 548 (VQCA…TCEA). N-linked (GlcNAc...) asparagine glycosylation is found at Asn198 and Asn202. N-linked (GlcNAc...) asparagine glycosylation is present at Asn264. 3 N-linked (GlcNAc...) asparagine glycosylation sites follow: Asn315, Asn327, and Asn331. N-linked (GlcNAc...) asparagine glycosylation occurs at Asn526. Residues 556 to 577 (LTVGLSAAGTSLLTLASFLFWL) form a helical membrane-spanning segment. Topologically, residues 578-610 (LKRLRRKAKKFVPASSYQSLQSDGSYQMPSESA) are cytoplasmic.

This sequence belongs to the selectin/LECAM family. In terms of assembly, interacts with SELPLG/PSGL1 and PODXL2 through the sialyl Lewis X epitope. SELPLG sulfation appears not to be required for this interaction.

It localises to the cell membrane. Cell-surface glycoprotein having a role in immunoadhesion. Mediates in the adhesion of blood neutrophils in cytokine-activated endothelium through interaction with SELPLG/PSGL1. May have a role in capillary morphogenesis. This is E-selectin (SELE) from Equus caballus (Horse).